The primary structure comprises 351 residues: Glycerol-3-phosphate dehydrogenase [NAD(P)+] (351 aa).

NADPH is bound by residues serine 18, tryptophan 19, arginine 38, and lysine 122. Sn-glycerol 3-phosphate contacts are provided by lysine 122, glycine 153, and serine 155. Residue alanine 157 coordinates NADPH. Residues lysine 208, aspartate 261, serine 271, arginine 272, and asparagine 273 each coordinate sn-glycerol 3-phosphate. Catalysis depends on lysine 208, which acts as the Proton acceptor. Arginine 272 serves as a coordination point for NADPH. Glutamate 297 is an NADPH binding site.

Belongs to the NAD-dependent glycerol-3-phosphate dehydrogenase family.

The protein resides in the cytoplasm. It carries out the reaction sn-glycerol 3-phosphate + NAD(+) = dihydroxyacetone phosphate + NADH + H(+). The catalysed reaction is sn-glycerol 3-phosphate + NADP(+) = dihydroxyacetone phosphate + NADPH + H(+). The protein operates within membrane lipid metabolism; glycerophospholipid metabolism. Functionally, catalyzes the reduction of the glycolytic intermediate dihydroxyacetone phosphate (DHAP) to sn-glycerol 3-phosphate (G3P), the key precursor for phospholipid synthesis. This is Glycerol-3-phosphate dehydrogenase [NAD(P)+] from Bordetella bronchiseptica (strain ATCC BAA-588 / NCTC 13252 / RB50) (Alcaligenes bronchisepticus).